We begin with the raw amino-acid sequence, 620 residues long: Eukaryotic translation initiation factor 2-alpha kinase 1 (620 aa).

A disordered region spans residues 1-38 (MLGGGSVDGERDTDDDAAGAVAAPPAIDFPAEVSDPKY). The segment covering 18-28 (AGAVAAPPAID) has biased composition (low complexity). Positions 85–104 (LHSKQVFKLLCQTFIKMGLL) match the SIFI-degron motif. In terms of domain architecture, Protein kinase spans 167 to 581 (FEELAILGKG…ALQLLQSELF (415 aa)). ATP contacts are provided by residues 173–181 (LGKGGYGRV) and Lys-196. The residue at position 283 (Thr-283) is a Phosphothreonine. An HRM 1 repeat occupies 408–413 (ACPYVM). Catalysis depends on Asp-440, which acts as the Proton acceptor. Thr-484 and Thr-486 each carry phosphothreonine; by autocatalysis. Thr-491 carries the phosphothreonine modification. The stretch at 550–555 (RCPVQA) is one HRM 2 repeat.

Belongs to the protein kinase superfamily. Ser/Thr protein kinase family. GCN2 subfamily. As to quaternary structure, synthesized in an inactive form that binds to the N-terminal domain of CDC37. Has to be associated with a multiprotein complex containing Hsp90, CDC37 and PPP5C for maturation and activation by autophosphorylation. The phosphatase PPP5C modulates this activation. Homodimer; homodimerizes in presence of heme, forming a disulfide-linked inactive homodimer. Interacts with DELE1; binds both to full-length DELE1 and processed form of DELE1 (S-DELE1) in response to stress, leading to activate its protein kinase activity and trigger the integrated stress response (ISR). Post-translationally, activated by autophosphorylation; phosphorylated predominantly on serine and threonine residues, but also on tyrosine residues. Autophosphorylation at Thr-486 is required for kinase activation. The active autophosphorylated form apparently is largely refractory to cellular heme fluctuations. In terms of processing, ubiquitinated and degraded by the SIFI complex once the mitochondrial stress has been resolved, thereby providing stress response silencing. Within the SIFI complex, UBR4 initiates ubiquitin chain that are further elongated or branched by KCMF1.

It localises to the cytoplasm. It carries out the reaction L-seryl-[protein] + ATP = O-phospho-L-seryl-[protein] + ADP + H(+). The enzyme catalyses L-threonyl-[protein] + ATP = O-phospho-L-threonyl-[protein] + ADP + H(+). With respect to regulation, in normal conditions, the protein kinase activity is inhibited; inhibition is relieved by various stress conditions. Inhibited by heme: in presence of heme, forms a disulfide-linked inactive homodimer. Heme depletion relieves inhibition and stimulates kinase activity by autophosphorylation. Inhibited by the heme metabolites biliverdin and bilirubin. Induced by oxidative stress generated by arsenite treatment. Binding of nitric oxide (NO) to the heme iron in the N-terminal heme-binding domain activates the kinase activity, while binding of carbon monoxide (CO) suppresses kinase activity. Protein kinase activity is also activated upon binding to DELE1 in response to various stress, triggering the integrated stress response (ISR): activated by full-length DELE1 in response to iron deficiency, while it is activated by the processed form of DELE1 (S-DELE1) in response to mitochondrial stress. Metabolic-stress sensing protein kinase that phosphorylates the alpha subunit of eukaryotic translation initiation factor 2 (EIF2S1/eIF-2-alpha) in response to various stress conditions. Key activator of the integrated stress response (ISR) required for adaptation to various stress, such as heme deficiency, oxidative stress, osmotic shock, mitochondrial dysfunction and heat shock. EIF2S1/eIF-2-alpha phosphorylation in response to stress converts EIF2S1/eIF-2-alpha in a global protein synthesis inhibitor, leading to a global attenuation of cap-dependent translation, while concomitantly initiating the preferential translation of ISR-specific mRNAs, such as the transcriptional activator ATF4, and hence allowing ATF4-mediated reprogramming. Acts as a key sensor of heme-deficiency: in normal conditions, binds hemin via a cysteine thiolate and histidine nitrogenous coordination, leading to inhibit the protein kinase activity. This binding occurs with moderate affinity, allowing it to sense the heme concentration within the cell: heme depletion relieves inhibition and stimulates kinase activity, activating the ISR. Thanks to this unique heme-sensing capacity, plays a crucial role to shut off protein synthesis during acute heme-deficient conditions. In red blood cells (RBCs), controls hemoglobin synthesis ensuring a coordinated regulation of the synthesis of its heme and globin moieties. It thereby plays an essential protective role for RBC survival in anemias of iron deficiency. Iron deficiency also triggers activation by full-length DELE1. Also activates the ISR in response to mitochondrial dysfunction: HRI/EIF2AK1 protein kinase activity is activated upon binding to the processed form of DELE1 (S-DELE1), thereby promoting the ATF4-mediated reprogramming. Also acts as an activator of mitophagy in response to mitochondrial damage: catalyzes phosphorylation of eIF-2-alpha (EIF2S1) following activation by S-DELE1, thereby promoting mitochondrial localization of EIF2S1, triggering PRKN-independent mitophagy. The polypeptide is Eukaryotic translation initiation factor 2-alpha kinase 1 (Rattus norvegicus (Rat)).